The following is a 101-amino-acid chain: Urease subunit gamma (101 aa).

Belongs to the urease gamma subunit family. Heterotrimer of UreA (gamma), UreB (beta) and UreC (alpha) subunits. Three heterotrimers associate to form the active enzyme.

It is found in the cytoplasm. The enzyme catalyses urea + 2 H2O + H(+) = hydrogencarbonate + 2 NH4(+). It participates in nitrogen metabolism; urea degradation; CO(2) and NH(3) from urea (urease route): step 1/1. This is Urease subunit gamma from Corynebacterium kroppenstedtii (strain DSM 44385 / JCM 11950 / CIP 105744 / CCUG 35717).